Reading from the N-terminus, the 570-residue chain is Sulfite reductase [NADPH] hemoprotein beta-component (570 aa).

Positions 434, 440, 479, and 483 each coordinate [4Fe-4S] cluster. Residue Cys-483 participates in siroheme binding.

It belongs to the nitrite and sulfite reductase 4Fe-4S domain family. In terms of assembly, alpha(8)-beta(8). The alpha component is a flavoprotein, the beta component is a hemoprotein. Siroheme serves as cofactor. The cofactor is [4Fe-4S] cluster.

The catalysed reaction is hydrogen sulfide + 3 NADP(+) + 3 H2O = sulfite + 3 NADPH + 4 H(+). It participates in sulfur metabolism; hydrogen sulfide biosynthesis; hydrogen sulfide from sulfite (NADPH route): step 1/1. Its function is as follows. Component of the sulfite reductase complex that catalyzes the 6-electron reduction of sulfite to sulfide. This is one of several activities required for the biosynthesis of L-cysteine from sulfate. The chain is Sulfite reductase [NADPH] hemoprotein beta-component from Shigella boydii serotype 4 (strain Sb227).